We begin with the raw amino-acid sequence, 247 residues long: DNA polymerase sliding clamp 1 (247 aa).

The protein belongs to the PCNA family. As to quaternary structure, heterotrimer. The subunits circularize to form a toroid; DNA passes through its center. Replication factor C (RFC) is required to load the toroid on the DNA.

In terms of biological role, sliding clamp subunit that acts as a moving platform for DNA processing. Responsible for tethering the catalytic subunit of DNA polymerase and other proteins to DNA during high-speed replication. This Aeropyrum pernix (strain ATCC 700893 / DSM 11879 / JCM 9820 / NBRC 100138 / K1) protein is DNA polymerase sliding clamp 1.